The sequence spans 910 residues: Seizure 6-like protein 2 (910 aa).

Positions 1–27 are cleaved as a signal peptide; the sequence is MGTPKAQHPPPSQLLLLILLSCAWIEG. Over 28-844 the chain is Extracellular; that stretch reads LPLKEDEMMP…DPSRQLEGGN (817 aa). Positions 70–152 are disordered; it reads PGSDPDPTLA…PLRPEGGEEE (83 aa). Residues 123–145 are compositionally biased toward pro residues; sequence LTPPPGTTAPPPPGPASPVPPLR. A disulfide bond links Cys173 and Cys202. One can recognise a CUB 1 domain in the interval 173-286; it reads CNNNISEGEG…NGFRIHYQAY (114 aa). Residue Asn222 is glycosylated (N-linked (GlcNAc...) asparagine). The 60-residue stretch at 288 to 347 folds into the Sushi 1 domain; that stretch reads LSCGFPPRPAHGDVSVTDLHPGGTATFHCDSGYQLQGEETLICLNGTRPAWTGEPPSCTA. 12 disulfide bridges follow: Cys290-Cys330, Cys316-Cys345, Cys349-Cys376, Cys464-Cys508, Cys491-Cys523, Cys527-Cys553, Cys644-Cys686, Cys672-Cys699, Cys705-Cys747, Cys733-Cys764, Cys771-Cys813, and Cys799-Cys828. 4 N-linked (GlcNAc...) asparagine glycosylation sites follow: Asn332, Asn373, Asn473, and Asn517. The CUB 2 domain occupies 349-459; sequence CGGTIHNATL…LLLSLRFEAF (111 aa). The 64-residue stretch at 462-525 folds into the Sushi 2 domain; the sequence is DRCFPPFLAH…WNDTEPACKA (64 aa). Positions 527-638 constitute a CUB 3 domain; that stretch reads CGGELSEPAG…QGFVLHFKEV (112 aa). Sushi domains lie at 642–701, 703–766, and 769–830; these read DTCP…ACQK, MTCA…KCAL, and EPCL…LCKV. A helical membrane pass occupies residues 845 to 865; it reads LALAILLPLGLVIVLGIGVYI. The Cytoplasmic portion of the chain corresponds to 866 to 910; it reads YYTKLQGKSLFGFSGSHSYSPITVESDFSNPLYEAGDTREYEVSI.

It belongs to the SEZ6 family. Expressed exclusively in the brain, predominantly in the neurons. Wide expression in the gray matter of the brain with high levels in the olfactory bulb, anterior olfactory nuclei, hippocampal formation and cerebellar cortex. Detected diffusely and weakly in the white matter, such as the corpus callosum and cerebellar medulla. In the cerebellar cortex, intensely expressed in Purkinje cells (PC) and granule cells. Detected also in interneurons in the molecular layer. Up-regulated at two weeks after birth.

The protein resides in the cell membrane. It is found in the endoplasmic reticulum membrane. In terms of biological role, may contribute to specialized endoplasmic reticulum functions in neurons. The sequence is that of Seizure 6-like protein 2 (Sez6l2) from Mus musculus (Mouse).